Here is a 138-residue protein sequence, read N- to C-terminus: Acidic phospholipase A2 BthA-1 (138 aa).

An N-terminal signal peptide occupies residues 1-16 (MRTLWIMAVLLVGVEG). 7 disulfides stabilise this stretch: cysteine 42–cysteine 131, cysteine 44–cysteine 60, cysteine 59–cysteine 111, cysteine 65–cysteine 138, cysteine 66–cysteine 104, cysteine 73–cysteine 97, and cysteine 91–cysteine 102. Ca(2+) contacts are provided by tyrosine 43, glycine 47, and glycine 48. Histidine 63 is an active-site residue. Residue aspartate 64 coordinates Ca(2+). The active site involves aspartate 105.

Belongs to the phospholipase A2 family. Group II subfamily. D49 sub-subfamily. As to quaternary structure, homodimer; non-covalently linked. Ca(2+) serves as cofactor. As to expression, expressed by the venom gland.

The protein localises to the secreted. The catalysed reaction is a 1,2-diacyl-sn-glycero-3-phosphocholine + H2O = a 1-acyl-sn-glycero-3-phosphocholine + a fatty acid + H(+). Its activity is regulated as follows. Inhibited by EDTA and bromophenacyl bromide (BPB). Functionally, snake venom phospholipase A2 (PLA2) that displays edema-inducing activities (activity that is inhibited by EDTA and dexamethasone), inhibits phospholipid-dependent collagen/ADP-induced platelet aggregation, possess hypotensive as well as anticoagulant activities. In addition, this enzyme shows bactericidal activity against E.coli and S.aureus. PLA2 catalyzes the calcium-dependent hydrolysis of the 2-acyl groups in 3-sn-phosphoglycerides. This Bothrops jararacussu (Jararacussu) protein is Acidic phospholipase A2 BthA-1.